The sequence spans 1079 residues: Lon protease homolog, mitochondrial (1079 aa).

The N-terminal 60 residues, 1-60 (MLRPRTYVRKLAWRCPRKSQLGLRLATSVSSHKSLPLPMNFDISHSQSAFRAYQDIIHRN), are a transit peptide targeting the mitochondrion. Basic and acidic residues predominate over residues 61–116 (KSVGDDEPSQRSENENNPSESDKDSNQDPETPKKDKESENDKEPEKEKDIENDNKV). Disordered stretches follow at residues 61-158 (KSVG…VDPV) and 262-285 (LTTP…ESFP). Positions 117 to 131 (SSESNENVTLASSNT) are enriched in polar residues. Low complexity predominate over residues 132–143 (GGAAPPNGNNNG). Residues 165-391 (LLAIPMKDRP…RALELLKVEL (227 aa)) form the Lon N-terminal domain. The segment covering 262–281 (LTTPSSEKEAKSEEPSKEDA) has biased composition (basic and acidic residues). 543 to 550 (GPPGTGKT) contacts ATP. Over residues 756 to 765 (ALDSSKEKEG) the composition is skewed to basic and acidic residues. Positions 756 to 832 (ALDSSKEKEG…SEEDQQPEPK (77 aa)) are disordered. The segment covering 768–779 (ASSEEANVNSES) has biased composition (low complexity). The span at 780–802 (TKSNTSQAEPVAESSTDISTKSK) shows a compositional bias: polar residues. Basic and acidic residues predominate over residues 803–818 (VASEKIETKEKKETNK). In terms of domain architecture, Lon proteolytic spans 865–1053 (FPPPGVATGL…QEVFDKIFPN (189 aa)). Active-site residues include Ser-959 and Lys-1002.

Belongs to the peptidase S16 family. As to quaternary structure, homohexamer or homoheptamer. Organized in a ring with a central cavity.

The protein resides in the mitochondrion matrix. The enzyme catalyses Hydrolysis of proteins in presence of ATP.. In terms of biological role, ATP-dependent serine protease that mediates the selective degradation of misfolded, unassembled or oxidatively damaged polypeptides as well as certain short-lived regulatory proteins in the mitochondrial matrix. May also have a chaperone function in the assembly of inner membrane protein complexes. Participates in the regulation of mitochondrial gene expression and in the maintenance of the integrity of the mitochondrial genome. Binds to mitochondrial DNA in a site-specific manner. The protein is Lon protease homolog, mitochondrial of Debaryomyces hansenii (strain ATCC 36239 / CBS 767 / BCRC 21394 / JCM 1990 / NBRC 0083 / IGC 2968) (Yeast).